The following is a 126-amino-acid chain: Prefoldin subunit beta (126 aa).

This sequence belongs to the prefoldin subunit beta family. In terms of assembly, heterohexamer of two alpha and four beta subunits.

It localises to the cytoplasm. Its function is as follows. Molecular chaperone capable of stabilizing a range of proteins. Seems to fulfill an ATP-independent, HSP70-like function in archaeal de novo protein folding. This chain is Prefoldin subunit beta, found in Pyrobaculum neutrophilum (strain DSM 2338 / JCM 9278 / NBRC 100436 / V24Sta) (Thermoproteus neutrophilus).